A 141-amino-acid polypeptide reads, in one-letter code: Nucleoside diphosphate kinase (141 aa).

Residues Lys11, Phe59, Arg87, Thr93, Arg104, and Asn114 each contribute to the ATP site. The active-site Pros-phosphohistidine intermediate is the His117.

It belongs to the NDK family. As to quaternary structure, homotetramer. Requires Mg(2+) as cofactor.

It is found in the cytoplasm. The enzyme catalyses a 2'-deoxyribonucleoside 5'-diphosphate + ATP = a 2'-deoxyribonucleoside 5'-triphosphate + ADP. The catalysed reaction is a ribonucleoside 5'-diphosphate + ATP = a ribonucleoside 5'-triphosphate + ADP. Its function is as follows. Major role in the synthesis of nucleoside triphosphates other than ATP. The ATP gamma phosphate is transferred to the NDP beta phosphate via a ping-pong mechanism, using a phosphorylated active-site intermediate. The polypeptide is Nucleoside diphosphate kinase (Pseudomonas putida (strain W619)).